A 214-amino-acid polypeptide reads, in one-letter code: NAD(P)H-quinone oxidoreductase subunit 5, chloroplastic (214 aa).

2 consecutive transmembrane segments (helical) span residues 84-104 and 152-172; these read LFPLLILLLFTFFIGFIGIPF and SLAILGLFIAYIFYGSAYSFF.

The protein belongs to the complex I subunit 5 family. In terms of assembly, NDH is composed of at least 16 different subunits, 5 of which are encoded in the nucleus.

It is found in the plastid. The protein resides in the chloroplast thylakoid membrane. The enzyme catalyses a plastoquinone + NADH + (n+1) H(+)(in) = a plastoquinol + NAD(+) + n H(+)(out). It carries out the reaction a plastoquinone + NADPH + (n+1) H(+)(in) = a plastoquinol + NADP(+) + n H(+)(out). In terms of biological role, NDH shuttles electrons from NAD(P)H:plastoquinone, via FMN and iron-sulfur (Fe-S) centers, to quinones in the photosynthetic chain and possibly in a chloroplast respiratory chain. The immediate electron acceptor for the enzyme in this species is believed to be plastoquinone. Couples the redox reaction to proton translocation, and thus conserves the redox energy in a proton gradient. In Brachypodium pinnatum (Tor grass), this protein is NAD(P)H-quinone oxidoreductase subunit 5, chloroplastic (ndhF).